A 562-amino-acid polypeptide reads, in one-letter code: NAD-dependent malic enzyme (562 aa).

The Proton donor role is filled by tyrosine 101. Residue arginine 154 coordinates NAD(+). The active-site Proton acceptor is lysine 172. A divalent metal cation is bound by residues glutamate 243, aspartate 244, and aspartate 267. The NAD(+) site is built by aspartate 267 and asparagine 415.

It belongs to the malic enzymes family. Homotetramer. Mg(2+) is required as a cofactor. The cofactor is Mn(2+).

It carries out the reaction (S)-malate + NAD(+) = pyruvate + CO2 + NADH. The enzyme catalyses oxaloacetate + H(+) = pyruvate + CO2. This Vibrio parahaemolyticus serotype O3:K6 (strain RIMD 2210633) protein is NAD-dependent malic enzyme.